Here is a 410-residue protein sequence, read N- to C-terminus: Probable peptidoglycan glycosyltransferase FtsW (410 aa).

Over 1–37 (MRSEERQLNLFGTSVNWSWPNLFKEREAPGMQLYDRA) the chain is Cytoplasmic. The chain crosses the membrane as a helical span at residues 38–58 (LLFAVLSLICFGFVMVMSASM). The Periplasmic portion of the chain corresponds to 59 to 69 (PEAQSLTGNPY). The chain crosses the membrane as a helical span at residues 70 to 90 (HFAIRHFAYLVGCAVIAAVVL). Over 91-99 (RIEMSRWQQ) the chain is Cytoplasmic. The helical transmembrane segment at 100–120 (FSPLLLLIVGIMLVAVLLVGT) threads the bilayer. Residues 121–131 (SVNGATRWLSV) lie on the Periplasmic side of the membrane. A helical membrane pass occupies residues 132–154 (GPIRIQVAELAKFAFTIYMAGYL). The Cytoplasmic portion of the chain corresponds to 155 to 163 (VRRHQEIRE). A helical membrane pass occupies residues 164 to 184 (NAKGFYKPIAVFAVYAFLILM). Over 185-186 (QP) the chain is Periplasmic. A helical transmembrane segment spans residues 187–207 (DLGTVVVLFVGTVGLLFLAGA). Residue R208 is a topological domain, cytoplasmic. The chain crosses the membrane as a helical span at residues 209–229 (LLDFFALILTGVMAFVALVLL). Residues 230–291 (EPYRMRRVTS…PEAHTDFIFA (62 aa)) are Periplasmic-facing. Residues 292-312 (VIGEELGFIGIVVVLSVLLFV) form a helical membrane-spanning segment. Over 313-336 (ALRAIKLGNLCIEIDKPFEGYLAY) the chain is Cytoplasmic. Residues 337–357 (AIGIWFCFQTVVNVGASIGML) traverse the membrane as a helical segment. The Periplasmic segment spans residues 358-364 (PTKGLTL). A helical transmembrane segment spans residues 365–385 (PFISYGGSSLWVMTAAAMILI). The Cytoplasmic portion of the chain corresponds to 386-410 (RIDHERRLSSIQAVQGKKVNDNREY).

This sequence belongs to the SEDS family. FtsW subfamily.

Its subcellular location is the cell inner membrane. The enzyme catalyses [GlcNAc-(1-&gt;4)-Mur2Ac(oyl-L-Ala-gamma-D-Glu-L-Lys-D-Ala-D-Ala)](n)-di-trans,octa-cis-undecaprenyl diphosphate + beta-D-GlcNAc-(1-&gt;4)-Mur2Ac(oyl-L-Ala-gamma-D-Glu-L-Lys-D-Ala-D-Ala)-di-trans,octa-cis-undecaprenyl diphosphate = [GlcNAc-(1-&gt;4)-Mur2Ac(oyl-L-Ala-gamma-D-Glu-L-Lys-D-Ala-D-Ala)](n+1)-di-trans,octa-cis-undecaprenyl diphosphate + di-trans,octa-cis-undecaprenyl diphosphate + H(+). It participates in cell wall biogenesis; peptidoglycan biosynthesis. In terms of biological role, peptidoglycan polymerase that is essential for cell division. The sequence is that of Probable peptidoglycan glycosyltransferase FtsW from Shewanella sediminis (strain HAW-EB3).